The chain runs to 198 residues: Holliday junction branch migration complex subunit RuvA (198 aa).

The interval 1–63 (MYDYIKGQLT…EDAHLLFGFH (63 aa)) is domain I. The domain II stretch occupies residues 64-142 (TEDEKDVFLK…EAPQETGHTK (79 aa)). A flexible linker region spans residues 143-147 (ARSNK). Residues 148 to 198 (AGNTQLDEAIEALLALGYKAKELKKIRAFFEGTSETAEQYIKSALKLLMKG) are domain III.

It belongs to the RuvA family. As to quaternary structure, homotetramer. Forms an RuvA(8)-RuvB(12)-Holliday junction (HJ) complex. HJ DNA is sandwiched between 2 RuvA tetramers; dsDNA enters through RuvA and exits via RuvB. An RuvB hexamer assembles on each DNA strand where it exits the tetramer. Each RuvB hexamer is contacted by two RuvA subunits (via domain III) on 2 adjacent RuvB subunits; this complex drives branch migration. In the full resolvosome a probable DNA-RuvA(4)-RuvB(12)-RuvC(2) complex forms which resolves the HJ.

It localises to the cytoplasm. The RuvA-RuvB-RuvC complex processes Holliday junction (HJ) DNA during genetic recombination and DNA repair, while the RuvA-RuvB complex plays an important role in the rescue of blocked DNA replication forks via replication fork reversal (RFR). RuvA specifically binds to HJ cruciform DNA, conferring on it an open structure. The RuvB hexamer acts as an ATP-dependent pump, pulling dsDNA into and through the RuvAB complex. HJ branch migration allows RuvC to scan DNA until it finds its consensus sequence, where it cleaves and resolves the cruciform DNA. This Streptococcus pyogenes serotype M1 protein is Holliday junction branch migration complex subunit RuvA.